Consider the following 303-residue polypeptide: WD repeat-containing protein 38 (303 aa).

WD repeat units lie at residues 24 to 63, 66 to 105, 108 to 147, 150 to 189, 195 to 233, 236 to 277, and 279 to 303; these read QHHGEVNCSAFSPDGRTLLTASDDGCVYVWGTKSGRLLWR, GHRGPVKSCCFSPDGRLIASSSSDHSIRLWDVARSKCLHV, GHQRSVETVSFSPDSKQLASGGWDKRAIVWEVQSGRRVHL, GHCDSIQSSDFSPTSDSLATGSWDSTVHIWDLRASTPVVS, GHTGNISCLCYSASGLLASGSWDKTICVWKPTTNNLPLQ, GHTI…ETLK, and MLDVAHACIFTPDGKLLVSGAAVTR.

This is WD repeat-containing protein 38 (Wdr38) from Mus musculus (Mouse).